The primary structure comprises 577 residues: MALNGPGVYHRTREHEQEDASDITKNILAESWKSWPNEAAFDRLEEHRGPLRLTLKGTIPSWAAGSLYRTGPGQSRVEDTARGTHFTTHWFDGFAQTHRFDIIPSEDGETQVWYSSRRQADEWIADVKKKGWRSGMTFGQKADPCVGIFAKVMTVFEPKLGNHNVALLANVPGVPKDEETEVSNGVPGPLGHRVNTSNLFVSTDYTGIRRIDPSTLQPLAETTQYDLHPSLSGPCSCSHAQRDPDSGDLFNFNLAFGRVPTYRIFRVDTASGETEVLATISDLNVPPAYMHSFFLTENHVVICIPASHYAWRGLKTQWEGNIIDSMKPFDKERKCKWLVVDRRHGKGLVATFSTPAAFFFHSINAFEKNIEDEDGTEQTDLFFDLAKYNNMDIIKGFYYDVLMDRDDATKKYWFKNDRYKNCAPTLTRYRFRLPSAPTPDTTFSASAEQVLAIPSPHAGELPTIHPLRNGKPYRYVYSASLRGLTTSVDALVKTDLDTSEAFIWTGPEGHTPGEPVFVPRPGAEAEDDGIVFSLVVDGVNEKAYILCLNGKTMEELGRAEADFAIGQGFHGIHLPAA.

Residues 1 to 20 (MALNGPGVYHRTREHEQEDA) form a disordered region. Histidine 239, histidine 291, histidine 361, and histidine 570 together coordinate Fe(2+).

It belongs to the carotenoid oxygenase family. Fe(2+) is required as a cofactor.

It is found in the cytoplasm. The protein resides in the cytosol. The catalysed reaction is torulene + O2 = 4'-apo-beta-carotenal + 3-methyl-2-butenal. It functions in the pathway carotenoid biosynthesis. Its function is as follows. Torulene dioxygenase; part of pathway that mediates the biosynthesis of neurosporaxanthin, a carboxylic apocarotenoid acting as an essential protective pigments and leading to orange pigmentation. CarT mediates the cleavage of torulene into beta-apo-4'-carotenal, the aldehyde corresponding to the acidic neurosporaxanthin. Is also active on other monocyclic synthetic substrates such as beta-apo-8'-carotenal and beta-apo-10'-carotenal to produce beta-apo-14'-carotenal and retinal(beta-apo-15'-carotenal), respectively. Neurosporaxanthin is synthesized from geranyl-geranyl pyrophosphate (GGPP) through several enzymatic activities. Phytoene synthase activity performed by the bifunctional enzyme carAR first produces phytoene from geranyl-geranyl pyrophosphate (GGPP). The phytoene dehydrogenase carB then introduces 4 desaturations to lead to lycopene which is substrate of the carotene cyclase activity of carAR that leads to the production of gamma-carotene. CarB then performs a 5th desaturation reaction to yield torulene. Torulene is the substrate of the dioxidase carT that breaks the molecule, removing five carbon atoms to yield beta-apo-4'-carotenal, whereas the aldehyde dehydrogenase carD mediates the last step by converting beta-apo-4'-carotenal into neurosporaxanthin. This Gibberella fujikuroi (strain CBS 195.34 / IMI 58289 / NRRL A-6831) (Bakanae and foot rot disease fungus) protein is Torulene dioxygenase.